We begin with the raw amino-acid sequence, 371 residues long: Succinyl-diaminopimelate desuccinylase (371 aa).

Residue His68 coordinates Zn(2+). Residue Asp70 is part of the active site. Asp99 provides a ligand contact to Zn(2+). The active-site Proton acceptor is Glu130. Zn(2+)-binding residues include Glu131, Glu159, and His344.

The protein belongs to the peptidase M20A family. DapE subfamily. As to quaternary structure, homodimer. Requires Zn(2+) as cofactor. The cofactor is Co(2+).

The catalysed reaction is N-succinyl-(2S,6S)-2,6-diaminopimelate + H2O = (2S,6S)-2,6-diaminopimelate + succinate. Its pathway is amino-acid biosynthesis; L-lysine biosynthesis via DAP pathway; LL-2,6-diaminopimelate from (S)-tetrahydrodipicolinate (succinylase route): step 3/3. In terms of biological role, catalyzes the hydrolysis of N-succinyl-L,L-diaminopimelic acid (SDAP), forming succinate and LL-2,6-diaminopimelate (DAP), an intermediate involved in the bacterial biosynthesis of lysine and meso-diaminopimelic acid, an essential component of bacterial cell walls. The chain is Succinyl-diaminopimelate desuccinylase from Acidiphilium cryptum (strain JF-5).